The chain runs to 262 residues: Cap-specific mRNA (nucleoside-2'-O-)-methyltransferase (262 aa).

One can recognise a RrmJ-type SAM-dependent 2'-O-MTase domain in the interval 34 to 226; that stretch reads TRRPRCWRKL…ERYLICFNKL (193 aa). 2 residues coordinate S-adenosyl-L-methionine: Gly-67 and Asp-140. Lys-180 acts as the Proton acceptor in catalysis.

The catalysed reaction is a 5'-end (N(7)-methyl 5'-triphosphoguanosine)-ribonucleoside in mRNA + S-adenosyl-L-methionine = a 5'-end (N(7)-methyl 5'-triphosphoguanosine)-(2'-O-methyl-ribonucleoside) in mRNA + S-adenosyl-L-homocysteine + H(+). S-adenosyl-L-methionine-dependent methyltransferase that mediates mRNA cap 2'-O-ribose methylation to the 5'-cap structure of late viral transcripts. In Lepidoptera (butterflies and moths), this protein is Cap-specific mRNA (nucleoside-2'-O-)-methyltransferase.